The following is a 212-amino-acid chain: Endoplasmic reticulum vesicle protein 25 (212 aa).

The N-terminal stretch at 1 to 21 (MKSFAACVLLLCALFFEQVFA) is a signal peptide. The Lumenal portion of the chain corresponds to 22 to 181 (VRFDIPASTK…TNESTNRRVR (160 aa)). One can recognise a GOLD domain in the interval 34 to 122 (QVCIRDFVSE…SRSIELDIES (89 aa)). The chain crosses the membrane as a helical span at residues 182–202 (NFSIAVIVVLVALGAWQVNYM). Over 203 to 212 (KNFFRAKHII) the chain is Cytoplasmic.

It belongs to the EMP24/GP25L family.

It is found in the endoplasmic reticulum membrane. The protein resides in the golgi apparatus membrane. Its function is as follows. Constituent of COPII-coated endoplasmic reticulum-derived transport vesicles. Required for efficient transport of a subset of secretory proteins to the Golgi. Facilitates retrograde transport from the Golgi to the endoplasmic reticulum. The sequence is that of Endoplasmic reticulum vesicle protein 25 (ERV25) from Kluyveromyces lactis (strain ATCC 8585 / CBS 2359 / DSM 70799 / NBRC 1267 / NRRL Y-1140 / WM37) (Yeast).